A 297-amino-acid chain; its full sequence is Bifunctional protein FolD 1 (297 aa).

Residues G164–S166, S193, and I234 contribute to the NADP(+) site.

The protein belongs to the tetrahydrofolate dehydrogenase/cyclohydrolase family. In terms of assembly, homodimer.

It carries out the reaction (6R)-5,10-methylene-5,6,7,8-tetrahydrofolate + NADP(+) = (6R)-5,10-methenyltetrahydrofolate + NADPH. It catalyses the reaction (6R)-5,10-methenyltetrahydrofolate + H2O = (6R)-10-formyltetrahydrofolate + H(+). Its pathway is one-carbon metabolism; tetrahydrofolate interconversion. Its function is as follows. Catalyzes the oxidation of 5,10-methylenetetrahydrofolate to 5,10-methenyltetrahydrofolate and then the hydrolysis of 5,10-methenyltetrahydrofolate to 10-formyltetrahydrofolate. This Haloarcula marismortui (strain ATCC 43049 / DSM 3752 / JCM 8966 / VKM B-1809) (Halobacterium marismortui) protein is Bifunctional protein FolD 1.